A 117-amino-acid chain; its full sequence is Large ribosomal subunit protein uL24 (117 aa).

Residues 1–10 show a composition bias toward basic residues; that stretch reads MSKQPRKQRK. The tract at residues 1 to 28 is disordered; the sequence is MSKQPRKQRKALYNAPAHARGKHMSATL.

The protein belongs to the universal ribosomal protein uL24 family. Part of the 50S ribosomal subunit.

One of two assembly initiator proteins, it binds directly to the 5'-end of the 23S rRNA, where it nucleates assembly of the 50S subunit. Functionally, located at the polypeptide exit tunnel on the outside of the subunit. This Methanobrevibacter smithii (strain ATCC 35061 / DSM 861 / OCM 144 / PS) protein is Large ribosomal subunit protein uL24.